The primary structure comprises 104 residues: Phosphoribosyl-ATP pyrophosphatase (104 aa).

This sequence belongs to the PRA-PH family.

The protein resides in the cytoplasm. The enzyme catalyses 1-(5-phospho-beta-D-ribosyl)-ATP + H2O = 1-(5-phospho-beta-D-ribosyl)-5'-AMP + diphosphate + H(+). The protein operates within amino-acid biosynthesis; L-histidine biosynthesis; L-histidine from 5-phospho-alpha-D-ribose 1-diphosphate: step 2/9. In Allorhizobium ampelinum (strain ATCC BAA-846 / DSM 112012 / S4) (Agrobacterium vitis (strain S4)), this protein is Phosphoribosyl-ATP pyrophosphatase.